A 341-amino-acid chain; its full sequence is tRNA N6-adenosine threonylcarbamoyltransferase (341 aa).

Fe cation contacts are provided by H111 and H115. Substrate is bound by residues A133–G137, D166, G179, D183, and N273. D301 serves as a coordination point for Fe cation.

This sequence belongs to the KAE1 / TsaD family. The cofactor is Fe(2+).

It is found in the cytoplasm. It catalyses the reaction L-threonylcarbamoyladenylate + adenosine(37) in tRNA = N(6)-L-threonylcarbamoyladenosine(37) in tRNA + AMP + H(+). Its function is as follows. Required for the formation of a threonylcarbamoyl group on adenosine at position 37 (t(6)A37) in tRNAs that read codons beginning with adenine. Is involved in the transfer of the threonylcarbamoyl moiety of threonylcarbamoyl-AMP (TC-AMP) to the N6 group of A37, together with TsaE and TsaB. TsaD likely plays a direct catalytic role in this reaction. The chain is tRNA N6-adenosine threonylcarbamoyltransferase from Geobacter metallireducens (strain ATCC 53774 / DSM 7210 / GS-15).